A 1035-amino-acid polypeptide reads, in one-letter code: Putative protein FAM47C (1035 aa).

Disordered stretches follow at residues 1–21 and 159–797; these read MGDQ…TPWY and LEDA…RRVS. The segment covering 159–173 has biased composition (basic and acidic residues); that stretch reads LEDAGSCEGQEKTTD. A compositionally biased stretch (pro residues) spans 380–392; the sequence is PEPPKTRVPPLRP. The span at 478 to 490 shows a compositional bias: basic and acidic residues; the sequence is PPEKDVSHLRPEP. A compositionally biased stretch (polar residues) spans 533-544; the sequence is SLHQAPPESSVS. 3 stretches are compositionally biased toward basic and acidic residues: residues 611-622, 683-694, and 753-766; these read PETRVSHLRPEP and EPLE…RPEP.

This sequence belongs to the FAM47 family.

This is Putative protein FAM47C (FAM47C) from Homo sapiens (Human).